Consider the following 78-residue polypeptide: uncharacterized protein (78 aa).

A helical membrane pass occupies residues 21–43; that stretch reads SPFLFGAPLVGGLLGGFLGSALF.

The protein resides in the membrane. This is an uncharacterized protein from Bacillus subtilis (strain 168).